Here is a 556-residue protein sequence, read N- to C-terminus: Small ribosomal subunit protein bS1 (556 aa).

6 consecutive S1 motif domains span residues 35–105 (TIKE…ISQQ), 120–183 (NAII…ISRK), 204–272 (TEPV…LSIK), 289–359 (GYAI…VSLK), 377–444 (DVLE…LSAK), and 461–525 (DSVI…ASVH).

Belongs to the bacterial ribosomal protein bS1 family.

Functionally, binds mRNA; thus facilitating recognition of the initiation point. It is needed to translate mRNA with a short Shine-Dalgarno (SD) purine-rich sequence. In Helicobacter pylori (strain ATCC 700392 / 26695) (Campylobacter pylori), this protein is Small ribosomal subunit protein bS1 (rpsA).